The primary structure comprises 3365 residues: Probable serine/threonine-protein kinase roco9 (3365 aa).

5 disordered regions span residues 1-177 (MTSI…KSSK), 397-497 (ESTE…QPPQ), 944-985 (PIKK…GFLS), 1044-1098 (IHQQ…NNKI), and 1261-1301 (QNNL…ISKG). A compositionally biased stretch (basic and acidic residues) spans 8–27 (FDKKSKRSNEDTGEKEETKK). 4 stretches are compositionally biased toward low complexity: residues 51-84 (LQQL…SLNT), 100-116 (STNS…STRS), 137-169 (SQTS…TVKT), and 397-415 (ESTE…TLEP). Positions 243 to 437 (TPLYSLIKRQ…RLPQQSSDDN (195 aa)) constitute a Rho-GAP domain. Positions 421 to 434 (PLSTSTQRLPQQSS) are enriched in polar residues. Composition is skewed to low complexity over residues 435 to 445 (DDNSNNDNNNK), 457 to 489 (NNDN…QPKQ), 959 to 974 (SSPL…IPSK), 1044 to 1096 (IHQQ…NNNN), and 1262 to 1301 (NNLN…ISKG). Positions 804-1484 (IWDIYSPLIE…DQIILWSSFF (681 aa)) constitute a Myotubularin phosphatase domain. LRR repeat units follow at residues 1510-1526 (SQKL…LSYF), 1527-1549 (STLT…IILL), 1550-1572 (SNLT…LLKL), 1576-1599 (KLKL…IYTL), 1600-1622 (STLT…ISKM), 1624-1645 (QLKC…LSLC), 1646-1668 (VGLE…FFKL), 1670-1691 (SLRM…KLDD), 1697-1720 (MNEI…MFEM), 1722-1743 (SLIH…LLDN), 1744-1770 (LVNL…LFKL), 1772-1789 (VLDL…HAML), 1790-1812 (PSLK…DFNL), 1814-1835 (LLSE…IGTK), 1837-1861 (LSLT…ALLK), and 1863-1887 (LKSL…DAIL). The segment covering 1932–1947 (SKEREKEKEKEKEKEK) has biased composition (basic and acidic residues). Disordered regions lie at residues 1932-1963 (SKER…DKDK), 2190-2389 (NNNN…NNGS), 2507-2567 (APST…LQTP), and 2674-2704 (SNQQ…TSIN). Low complexity-rich tracts occupy residues 2190-2205 (NNNN…NNNN), 2216-2389 (SINN…NNGS), 2522-2567 (NNTS…LQTP), and 2676-2688 (QQQQ…STQH). One can recognise a Protein kinase domain in the interval 3008-3269 (ELDPNPIGEG…KKLEEIELIL (262 aa)). Residues 3014-3022 (IGEGGTATV) and lysine 3035 each bind ATP. The active-site Proton acceptor is aspartate 3132. Over residues 3311-3333 (QQQKQQQLQQQKQSPKQLQQQKP) the composition is skewed to low complexity. The segment at 3311–3365 (QQQKQQQLQQQKQSPKQLQQQKPLPTPPKQLSNNDSTPTKPLDDSSDSSSEDSNN) is disordered. Positions 3354–3365 (DSSDSSSEDSNN) are enriched in acidic residues.

It belongs to the protein kinase superfamily. TKL Ser/Thr protein kinase family. ROCO subfamily.

It carries out the reaction L-seryl-[protein] + ATP = O-phospho-L-seryl-[protein] + ADP + H(+). The catalysed reaction is L-threonyl-[protein] + ATP = O-phospho-L-threonyl-[protein] + ADP + H(+). The sequence is that of Probable serine/threonine-protein kinase roco9 (roco9) from Dictyostelium discoideum (Social amoeba).